Here is a 409-residue protein sequence, read N- to C-terminus: tRNA-specific 2-thiouridylase MnmA (409 aa).

ATP is bound by residues 20-27 (AMSGGVDS) and L46. C114 (nucleophile) is an active-site residue. An intrachain disulfide couples C114 to C210. Position 138 (G138) interacts with ATP. The interval 160-162 (RDQ) is interaction with tRNA. C210 functions as the Cysteine persulfide intermediate in the catalytic mechanism.

It belongs to the MnmA/TRMU family.

It is found in the cytoplasm. The catalysed reaction is S-sulfanyl-L-cysteinyl-[protein] + uridine(34) in tRNA + AH2 + ATP = 2-thiouridine(34) in tRNA + L-cysteinyl-[protein] + A + AMP + diphosphate + H(+). In terms of biological role, catalyzes the 2-thiolation of uridine at the wobble position (U34) of tRNA, leading to the formation of s(2)U34. The sequence is that of tRNA-specific 2-thiouridylase MnmA from Bartonella henselae (strain ATCC 49882 / DSM 28221 / CCUG 30454 / Houston 1) (Rochalimaea henselae).